Here is a 533-residue protein sequence, read N- to C-terminus: Sterol 26-hydroxylase, mitochondrial (533 aa).

Residues 1 to 32 (MAVLSRMRLRWALLDTRVMGHGLCPQGARAKA) constitute a mitochondrion transit peptide. Residues 38 to 58 (LRDHESTEGPGTGQDRPRLRS) form a disordered region. An N6-acetyllysine mark is found at Lys142 and Lys375. A sterol-binding region spans residues 386-400 (PLLKAVIKETLRLYP). Cys479 is a heme binding site. Residues Lys512 and Lys523 each carry the N6-acetyllysine modification.

This sequence belongs to the cytochrome P450 family. As to quaternary structure, interacts with HSP70; this interaction is required for initial targeting to mitochondria. The cofactor is heme. In terms of tissue distribution, expressed in liver, kidney and ovary.

The protein resides in the mitochondrion inner membrane. The enzyme catalyses 5beta-cholestane-3alpha,7alpha,12alpha-triol + 6 reduced [adrenodoxin] + 3 O2 + 5 H(+) = (25R)-3alpha,7alpha,12alpha-trihydroxy-5beta-cholestan-26-oate + 6 oxidized [adrenodoxin] + 4 H2O. It carries out the reaction cholestanol + 2 reduced [adrenodoxin] + O2 + 2 H(+) = (25R)-26-hydroxycholestanol + 2 oxidized [adrenodoxin] + H2O. The catalysed reaction is (25R)-3beta-hydroxycholest-5-en-7-one-26-al + 2 reduced [adrenodoxin] + O2 + H(+) = (25R)-3beta-hydroxycholest-5-en-7-one-26-oate + 2 oxidized [adrenodoxin] + H2O. It catalyses the reaction (25R)-3beta,26-dihydroxycholest-5-en-7-one + 2 reduced [adrenodoxin] + O2 + 2 H(+) = (25R)-3beta-hydroxycholest-5-en-7-one-26-al + 2 oxidized [adrenodoxin] + 2 H2O. The enzyme catalyses 7-oxocholesterol + 2 reduced [adrenodoxin] + O2 + 2 H(+) = (25R)-3beta,26-dihydroxycholest-5-en-7-one + 2 oxidized [adrenodoxin] + H2O. It carries out the reaction calciol + 2 reduced [adrenodoxin] + O2 + 2 H(+) = calcidiol + 2 oxidized [adrenodoxin] + H2O. The catalysed reaction is (25R)-5beta-cholestane-3alpha,7alpha,12alpha,26-tetrol + 2 reduced [adrenodoxin] + O2 + 2 H(+) = (25R)-3alpha,7alpha,12alpha-trihydroxy-5beta-cholestan-26-al + 2 oxidized [adrenodoxin] + 2 H2O. It catalyses the reaction 2 reduced [adrenodoxin] + cholesterol + O2 + 2 H(+) = (25R)-cholest-5-ene-3beta,26-diol + 2 oxidized [adrenodoxin] + H2O. The enzyme catalyses (25R)-3beta,4beta-dihydroxycholest-5-en-26-al + 2 reduced [adrenodoxin] + O2 + H(+) = (25R)-3beta,4beta-dihydroxycholest-5-en-26-oate + 2 oxidized [adrenodoxin] + H2O. It carries out the reaction (25R)-4beta,26-dihydroxycholesterol + 2 reduced [adrenodoxin] + O2 + 2 H(+) = (25R)-3beta,4beta-dihydroxycholest-5-en-26-al + 2 oxidized [adrenodoxin] + 2 H2O. The catalysed reaction is 4beta-hydroxycholesterol + 2 reduced [adrenodoxin] + O2 + 2 H(+) = (25R)-4beta,26-dihydroxycholesterol + 2 oxidized [adrenodoxin] + H2O. It catalyses the reaction (25R)-3beta-hydroxy-5-cholesten-26-al + 2 reduced [adrenodoxin] + O2 + H(+) = (25R)-3beta-hydroxy-5-cholestenoate + 2 oxidized [adrenodoxin] + H2O. The enzyme catalyses (25R)-cholest-5-ene-3beta,26-diol + 2 reduced [adrenodoxin] + O2 + 2 H(+) = (25R)-3beta-hydroxy-5-cholesten-26-al + 2 oxidized [adrenodoxin] + 2 H2O. It carries out the reaction (25R)-3alpha,7alpha,12alpha-trihydroxy-5beta-cholestan-26-al + 2 reduced [adrenodoxin] + O2 + H(+) = (25R)-3alpha,7alpha,12alpha-trihydroxy-5beta-cholestan-26-oate + 2 oxidized [adrenodoxin] + H2O. The catalysed reaction is 5beta-cholestane-3alpha,7alpha,12alpha-triol + 2 reduced [adrenodoxin] + O2 + 2 H(+) = (25R)-5beta-cholestane-3alpha,7alpha,12alpha,26-tetrol + 2 oxidized [adrenodoxin] + H2O. It functions in the pathway hormone biosynthesis; cholecalciferol biosynthesis. It participates in steroid metabolism; cholesterol degradation. The protein operates within lipid metabolism; bile acid biosynthesis. In terms of biological role, cytochrome P450 monooxygenase that catalyzes regio- and stereospecific hydroxylation of cholesterol and its derivatives. Hydroxylates (with R stereochemistry) the terminal methyl group of cholesterol side-chain in a three step reaction to yield at first a C26 alcohol, then a C26 aldehyde and finally a C26 acid. Regulates cholesterol homeostasis by catalyzing the conversion of excess cholesterol to bile acids via both the 'neutral' (classic) and the 'acid' (alternative) pathways. May also regulate cholesterol homeostasis via generation of active oxysterols, which act as ligands for NR1H2 and NR1H3 nuclear receptors, modulating the transcription of genes involved in lipid metabolism. Plays a role in cholestanol metabolism in the cerebellum. Similarly to cholesterol, hydroxylates cholestanol and may facilitate sterol diffusion through the blood-brain barrier to the systemic circulation for further degradation. Also hydroxylates retinal 7-ketocholesterol, a noxious oxysterol with pro-inflammatory and pro-apoptotic effects, and may play a role in its elimination from the retinal pigment epithelium. May play a redundant role in vitamin D biosynthesis. Catalyzes 25-hydroxylation of vitamin D3 that is required for its conversion to a functionally active form. This is Sterol 26-hydroxylase, mitochondrial (Cyp27a1) from Rattus norvegicus (Rat).